A 228-amino-acid polypeptide reads, in one-letter code: Ribose-5-phosphate isomerase A (228 aa).

Substrate is bound by residues 29–32 (TGST), 85–88 (DGAD), and 98–101 (KGGG). Glu107 functions as the Proton acceptor in the catalytic mechanism. Lys125 contributes to the substrate binding site.

This sequence belongs to the ribose 5-phosphate isomerase family. In terms of assembly, homodimer.

It catalyses the reaction aldehydo-D-ribose 5-phosphate = D-ribulose 5-phosphate. Its pathway is carbohydrate degradation; pentose phosphate pathway; D-ribose 5-phosphate from D-ribulose 5-phosphate (non-oxidative stage): step 1/1. Functionally, catalyzes the reversible conversion of ribose-5-phosphate to ribulose 5-phosphate. The chain is Ribose-5-phosphate isomerase A from Staphylococcus aureus (strain MRSA252).